A 169-amino-acid chain; its full sequence is Large ribosomal subunit protein uL10 (169 aa).

Belongs to the universal ribosomal protein uL10 family. Part of the ribosomal stalk of the 50S ribosomal subunit. The N-terminus interacts with L11 and the large rRNA to form the base of the stalk. The C-terminus forms an elongated spine to which L12 dimers bind in a sequential fashion forming a multimeric L10(L12)X complex.

In terms of biological role, forms part of the ribosomal stalk, playing a central role in the interaction of the ribosome with GTP-bound translation factors. The sequence is that of Large ribosomal subunit protein uL10 from Lactobacillus delbrueckii subsp. bulgaricus (strain ATCC 11842 / DSM 20081 / BCRC 10696 / JCM 1002 / NBRC 13953 / NCIMB 11778 / NCTC 12712 / WDCM 00102 / Lb 14).